A 540-amino-acid chain; its full sequence is UDP-N-acetylmuramyl-tripeptide synthetase (540 aa).

Ser33 provides a ligand contact to UDP-N-acetyl-alpha-D-muramoyl-L-alanyl-D-glutamate. 114 to 120 provides a ligand contact to ATP; that stretch reads GTEGKSS. UDP-N-acetyl-alpha-D-muramoyl-L-alanyl-D-glutamate contacts are provided by residues 158–159, Ser185, and Arg195; that span reads TT. Lys227 is modified (N6-carboxylysine).

This sequence belongs to the MurCDEF family. MurE subfamily. Carboxylation is probably crucial for Mg(2+) binding and, consequently, for the gamma-phosphate positioning of ATP.

Its subcellular location is the cytoplasm. It participates in cell wall biogenesis; peptidoglycan biosynthesis. Catalyzes the addition of an amino acid to the nucleotide precursor UDP-N-acetylmuramoyl-L-alanyl-D-glutamate (UMAG) in the biosynthesis of bacterial cell-wall peptidoglycan. This chain is UDP-N-acetylmuramyl-tripeptide synthetase, found in Treponema pallidum (strain Nichols).